Here is a 585-residue protein sequence, read N- to C-terminus: Pyruvate kinase (585 aa).

Residue Arg-32 participates in substrate binding. K(+) contacts are provided by Asn-34, Ser-36, Asp-66, and Thr-67. Asn-34 to His-37 provides a ligand contact to ATP. Positions 73 and 156 each coordinate ATP. Position 221 (Glu-221) interacts with Mg(2+). Positions 244, 245, and 277 each coordinate substrate. Asp-245 contributes to the Mg(2+) binding site.

Belongs to the pyruvate kinase family. It in the C-terminal section; belongs to the PEP-utilizing enzyme family. The cofactor is Mg(2+). Requires K(+) as cofactor.

It catalyses the reaction pyruvate + ATP = phosphoenolpyruvate + ADP + H(+). Its pathway is carbohydrate degradation; glycolysis; pyruvate from D-glyceraldehyde 3-phosphate: step 5/5. The polypeptide is Pyruvate kinase (pyk) (Staphylococcus aureus (strain MRSA252)).